A 505-amino-acid polypeptide reads, in one-letter code: 2,3-bisphosphoglycerate-independent phosphoglycerate mutase (505 aa).

2 residues coordinate Mn(2+): D12 and S62. The Phosphoserine intermediate role is filled by S62. Residues H123, 153 to 154 (RD), R185, R191, 257 to 260 (RPDR), and K330 contribute to the substrate site. Mn(2+)-binding residues include D397, H401, D438, H439, and H456.

This sequence belongs to the BPG-independent phosphoglycerate mutase family. As to quaternary structure, monomer. Mn(2+) is required as a cofactor.

The catalysed reaction is (2R)-2-phosphoglycerate = (2R)-3-phosphoglycerate. It functions in the pathway carbohydrate degradation; glycolysis; pyruvate from D-glyceraldehyde 3-phosphate: step 3/5. Catalyzes the interconversion of 2-phosphoglycerate and 3-phosphoglycerate. The protein is 2,3-bisphosphoglycerate-independent phosphoglycerate mutase of Staphylococcus aureus (strain Mu50 / ATCC 700699).